The following is a 90-amino-acid chain: UPF0237 protein BL1209.1 (90 aa).

Residues 5–79 (IITVVGQDTV…DDIGVRIRCQ (75 aa)) form the ACT domain.

It belongs to the UPF0237 family.

The protein is UPF0237 protein BL1209.1 of Bifidobacterium longum (strain NCC 2705).